A 251-amino-acid polypeptide reads, in one-letter code: MKKAGLLFLVMIVIAVVAAGIGYWKLTGEESDTLRKIVLEECLPNQQQNQNPSPCAEVKPNAGYVVLKDLNGPLQYLLMPTYRINGTESPLLTDPSTPNFFWLAWQGRDFMSKKYGQPVPDRAVSLAINSRTGRTQNHFHIHISCIRPDVREQLDNNLANISSRWLPLPGGLRGHEYLARRVTESELVQRSPFMMLAEEVPEAREHMGSYGLAMVRQSDNSFVLLATQRNLLTLNRASAEEIQDHQCEILR.

Residues Ala4–Trp24 traverse the membrane as a helical segment.

It belongs to the Cdh family.

The protein localises to the cell inner membrane. The catalysed reaction is a CDP-1,2-diacyl-sn-glycerol + H2O = a 1,2-diacyl-sn-glycero-3-phosphate + CMP + 2 H(+). Its pathway is phospholipid metabolism; CDP-diacylglycerol degradation; phosphatidate from CDP-diacylglycerol: step 1/1. This is CDP-diacylglycerol pyrophosphatase from Escherichia coli O7:K1 (strain IAI39 / ExPEC).